Reading from the N-terminus, the 442-residue chain is MGGDIHLCSMILGKNHLIFLYFANLFGSTLSFLATIITIVFYLVKKYIQNKSFRENPHQYCHQHQYFDSSKLNEINNSGVGSYSSTPISIQNNNNKNNNLPKQKNNEKQPLINKNHNNYCNYSTSATSSSSSSSSFSSTNSGSSYEYQQPQKNQQTLSSSDKNNTIPSTNTKYEIELSIPQFKGNKCGPNCLLFSNIPQIKNALEQKKNPKKIDTLIFYLSISDFIAVSGIIIEQLIIIFNKEISKSIGFCIGERVSIHFGLLATLFWSNCIAYYLLRETYELKPYNIRFVYFHIVCWGMALIGVASLFFSKIITVSNIDQGGSWCSVSSSYQLYFWVIPLFVSFTWNLICYCLIYRKFNKIIGIYGIQSVQIKTIIIRKLSFYLLAFLITWVWDVINNSIFLYEGKCPPFALWILQEFFSSGYGFFNSLAYAVTTRFYSRK.

The Extracellular portion of the chain corresponds to 1–16; that stretch reads MGGDIHLCSMILGKNH. The chain crosses the membrane as a helical span at residues 17–37; sequence LIFLYFANLFGSTLSFLATII. Over 38–219 the chain is Cytoplasmic; sequence TIVFYLVKKY…PKKIDTLIFY (182 aa). A disordered region spans residues 83–166; sequence YSSTPISIQN…LSSSDKNNTI (84 aa). Residues 91–103 show a composition bias toward low complexity; the sequence is QNNNNKNNNLPKQ. The span at 112 to 122 shows a compositional bias: polar residues; the sequence is INKNHNNYCNY. The segment covering 123–144 has biased composition (low complexity); it reads STSATSSSSSSSSFSSTNSGSS. Over residues 145–166 the composition is skewed to polar residues; the sequence is YEYQQPQKNQQTLSSSDKNNTI. A helical transmembrane segment spans residues 220–240; sequence LSISDFIAVSGIIIEQLIIIF. Over 241–255 the chain is Extracellular; the sequence is NKEISKSIGFCIGER. A helical transmembrane segment spans residues 256 to 276; it reads VSIHFGLLATLFWSNCIAYYL. Residues 277 to 289 are Cytoplasmic-facing; it reads LRETYELKPYNIR. A helical transmembrane segment spans residues 290 to 310; the sequence is FVYFHIVCWGMALIGVASLFF. The Extracellular portion of the chain corresponds to 311–334; it reads SKIITVSNIDQGGSWCSVSSSYQL. The chain crosses the membrane as a helical span at residues 335–355; sequence YFWVIPLFVSFTWNLICYCLI. At 356–382 the chain is on the cytoplasmic side; that stretch reads YRKFNKIIGIYGIQSVQIKTIIIRKLS. The helical transmembrane segment at 383–403 threads the bilayer; it reads FYLLAFLITWVWDVINNSIFL. The Extracellular segment spans residues 404-410; that stretch reads YEGKCPP. A helical membrane pass occupies residues 411-431; the sequence is FALWILQEFFSSGYGFFNSLA. At 432–442 the chain is on the cytoplasmic side; the sequence is YAVTTRFYSRK.

It belongs to the G-protein coupled receptor 5 family.

The protein localises to the membrane. Functionally, receptor for cAMP. The protein is Cyclic AMP receptor-like protein B (crlB) of Dictyostelium discoideum (Social amoeba).